The chain runs to 460 residues: Photosystem II CP43 reaction center protein (460 aa).

The Cytoplasmic portion of the chain corresponds to 1–35; the sequence is MVTLSNTSMVGGRDLPSTGFAWWSGNARLINLSGK. Residues 36 to 58 traverse the membrane as a helical segment; sequence LLGAHVAHAGLIVFWAGAMTLFE. At 59 to 98 the chain is on the lumenal, thylakoid side; sequence VAHFIPEKPMYEQGLILLPHIATLGWGVGPAGEVTDIFPF. A helical membrane pass occupies residues 99–121; the sequence is FVVGVLHLISSAVLGLGGIYHAL. Topologically, residues 122-142 are cytoplasmic; the sequence is RGPEVLEEYSSFFGYDWKDKN. The helical transmembrane segment at 143 to 165 threads the bilayer; that stretch reads QMTNIIGYHLILLGCGALLLVFK. The Lumenal, thylakoid portion of the chain corresponds to 166-220; the sequence is AMFFGGVYDTWAPGGGDVRVITNPTLNPAIIFGYLLKAPFGGEGWIISVNNMEDI. A helical membrane pass occupies residues 221–240; it reads IGGHIWIGLICISGGIWHIL. Residues 241 to 255 lie on the Cytoplasmic side of the membrane; sequence TKPFGWARRALIWSG. Residues 256 to 276 traverse the membrane as a helical segment; the sequence is EAYLSYSLGALSLMGFIASVF. The Lumenal, thylakoid portion of the chain corresponds to 277–411; sequence VWFNNTAYPS…NSFNYVSPRA (135 aa). [CaMn4O5] cluster is bound by residues E341 and R344. A helical transmembrane segment spans residues 412-436; that stretch reads WLATSHFVLGFFFLVGHLWHAGRAR. The Cytoplasmic segment spans residues 437-460; that stretch reads AAAAGFEKGIDRETEPTLFMPDLD.

This sequence belongs to the PsbB/PsbC family. PsbC subfamily. In terms of assembly, PSII is composed of 1 copy each of membrane proteins PsbA, PsbB, PsbC, PsbD, PsbE, PsbF, PsbH, PsbI, PsbJ, PsbK, PsbL, PsbM, PsbT, PsbX, PsbY, PsbZ, Psb30/Ycf12, peripheral proteins PsbO, CyanoQ (PsbQ), PsbU, PsbV and a large number of cofactors. It forms dimeric complexes. Binds multiple chlorophylls and provides some of the ligands for the Ca-4Mn-5O cluster of the oxygen-evolving complex. It may also provide a ligand for a Cl- that is required for oxygen evolution. PSII binds additional chlorophylls, carotenoids and specific lipids. serves as cofactor.

The protein localises to the cellular thylakoid membrane. Functionally, one of the components of the core complex of photosystem II (PSII). PSII binds chlorophyll and helps catalyze the primary light-induced photochemical processes of PSII. PSII is a light-driven water:plastoquinone oxidoreductase, using light energy to abstract electrons from H(2)O, generating O(2) and a proton gradient subsequently used for ATP formation. Required for correct assembly of PSII. This chain is Photosystem II CP43 reaction center protein, found in Synechocystis sp. (strain ATCC 27184 / PCC 6803 / Kazusa).